A 359-amino-acid chain; its full sequence is S-adenosylmethionine:tRNA ribosyltransferase-isomerase (359 aa).

This sequence belongs to the QueA family. In terms of assembly, monomer.

The protein resides in the cytoplasm. The catalysed reaction is 7-aminomethyl-7-carbaguanosine(34) in tRNA + S-adenosyl-L-methionine = epoxyqueuosine(34) in tRNA + adenine + L-methionine + 2 H(+). It participates in tRNA modification; tRNA-queuosine biosynthesis. Its function is as follows. Transfers and isomerizes the ribose moiety from AdoMet to the 7-aminomethyl group of 7-deazaguanine (preQ1-tRNA) to give epoxyqueuosine (oQ-tRNA). This Ralstonia pickettii (strain 12J) protein is S-adenosylmethionine:tRNA ribosyltransferase-isomerase.